A 274-amino-acid chain; its full sequence is Large ribosomal subunit protein uL2 (274 aa).

Disordered stretches follow at residues 28 to 54 (APYAPLLEKNSKSGGRNNNGRITTRHI) and 223 to 265 (VAMN…KRTD). Over residues 39–48 (KSGGRNNNGR) the composition is skewed to low complexity.

This sequence belongs to the universal ribosomal protein uL2 family. In terms of assembly, part of the 50S ribosomal subunit. Forms a bridge to the 30S subunit in the 70S ribosome.

Functionally, one of the primary rRNA binding proteins. Required for association of the 30S and 50S subunits to form the 70S ribosome, for tRNA binding and peptide bond formation. It has been suggested to have peptidyltransferase activity; this is somewhat controversial. Makes several contacts with the 16S rRNA in the 70S ribosome. The protein is Large ribosomal subunit protein uL2 of Alteromonas mediterranea (strain DSM 17117 / CIP 110805 / LMG 28347 / Deep ecotype).